We begin with the raw amino-acid sequence, 187 residues long: ATP-dependent protease subunit HslV (187 aa).

Threonine 7 is an active-site residue. Alanine 162, cysteine 165, and threonine 168 together coordinate Na(+).

Belongs to the peptidase T1B family. HslV subfamily. A double ring-shaped homohexamer of HslV is capped on each side by a ring-shaped HslU homohexamer. The assembly of the HslU/HslV complex is dependent on binding of ATP.

Its subcellular location is the cytoplasm. The enzyme catalyses ATP-dependent cleavage of peptide bonds with broad specificity.. Its activity is regulated as follows. Allosterically activated by HslU binding. Protease subunit of a proteasome-like degradation complex believed to be a general protein degrading machinery. The chain is ATP-dependent protease subunit HslV from Methylococcus capsulatus (strain ATCC 33009 / NCIMB 11132 / Bath).